Here is a 145-residue protein sequence, read N- to C-terminus: uncharacterized protein (145 aa).

A signal peptide spans 1–20; the sequence is MKTCTVICCTALVLGLTAYA.

This is an uncharacterized protein from Aedes vexans (Inland floodwater mosquito).